A 105-amino-acid polypeptide reads, in one-letter code: U2-lycotoxin-Ls1a (105 aa).

Positions 1–17 are cleaved as a signal peptide; it reads MIKYVLISALLVVAVYS. Residues 18–41 constitute a propeptide that is removed on maturation; sequence FTIEDNEDALLEEAEDELDTEEER. 4 cysteine pairs are disulfide-bonded: Cys-51/Cys-67, Cys-58/Cys-97, Cys-60/Cys-83, and Cys-69/Cys-81.

It belongs to the neurotoxin 04 (omega-agtx) family. 01 (type I omega-agtx) subfamily. As to expression, expressed by the venom gland.

The protein resides in the secreted. Functionally, insecticidal to house crickets. It induces an excitatory slow-onset impact that leads to irreversible spastic paralysis. It also modifies human voltage-gated potassium channel Kv1.5/KCNA5. Most likely, it binds to the voltage-sensing domain of the channel, suggesting it does not block the pore but prevents its opening at physiological membrane potentials. The recombinant peptide binds to the channel in an irreversible manner and slows down the hKv1.5 current activation kinetics. It is not toxic to mice, when intracranially injected (at 0.5 ug/g mouse). In Lycosa singoriensis (Wolf spider), this protein is U2-lycotoxin-Ls1a.